A 267-amino-acid chain; its full sequence is NAD kinase 2 (267 aa).

Aspartate 50 functions as the Proton acceptor in the catalytic mechanism. Residues 50–51 (DG), lysine 55, 122–123 (NE), arginine 149, aspartate 151, 162–167 (TAYNKS), and alanine 186 contribute to the NAD(+) site.

Belongs to the NAD kinase family. It depends on a divalent metal cation as a cofactor.

It localises to the cytoplasm. It catalyses the reaction NAD(+) + ATP = ADP + NADP(+) + H(+). In terms of biological role, involved in the regulation of the intracellular balance of NAD and NADP, and is a key enzyme in the biosynthesis of NADP. Catalyzes specifically the phosphorylation on 2'-hydroxyl of the adenosine moiety of NAD to yield NADP. This chain is NAD kinase 2, found in Listeria monocytogenes serovar 1/2a (strain ATCC BAA-679 / EGD-e).